A 426-amino-acid chain; its full sequence is Squamosa promoter-binding-like protein 10 (426 aa).

An SBP-type zinc finger spans residues 178 to 255; that stretch reads PPRCQAEGCK…AEHNRRRRKP (78 aa). Residues cysteine 181, cysteine 186, cysteine 203, histidine 206, cysteine 222, cysteine 225, histidine 229, and cysteine 241 each contribute to the Zn(2+) site. Positions 238 to 254 match the Bipartite nuclear localization signal motif; that stretch reads KRSCRKRLAEHNRRRRK. Low complexity-rich tracts occupy residues 268-287 and 401-417; these read DAAA…AATS and SDQN…NNNN. Disordered regions lie at residues 268–290 and 392–426; these read DAAA…SYTG and PSTA…VDFM.

In terms of tissue distribution, expressed in stems, leaf sheaths, and young panicles.

The protein resides in the nucleus. Its function is as follows. Trans-acting factor that binds specifically to the consensus nucleotide sequence 5'-TNCGTACAA-3'. This Oryza sativa subsp. indica (Rice) protein is Squamosa promoter-binding-like protein 10 (SPL10).